Consider the following 1049-residue polypeptide: Presequence protease, mitochondrial (1049 aa).

The transit peptide at 1 to 39 (MLRSYLHLGRHRTPAFRQPLGRLLRPTASILQYAQSRTL) directs the protein to the mitochondrion. H113 is a binding site for Zn(2+). E116 (proton acceptor) is an active-site residue. Residue H117 coordinates Zn(2+). E189 is a catalytic residue. E222 is a binding site for Zn(2+).

Belongs to the peptidase M16 family. PreP subfamily. As to quaternary structure, monomer and homodimer; homodimerization is induced by binding of the substrate. Zn(2+) serves as cofactor.

The protein resides in the mitochondrion intermembrane space. It is found in the mitochondrion matrix. In terms of biological role, degrades mitochondrial transit peptides after their cleavage in the intermembrane space or in the matrix, and presequence peptides; clearance of these peptides is required to keep the presequence processing machinery running. Preferentially cleaves the N-terminal side of paired basic amino acid residues. Also degrades other unstructured peptides. May function as an ATP-dependent peptidase as opposed to a metalloendopeptidase. This is Presequence protease, mitochondrial (cym1) from Emericella nidulans (strain FGSC A4 / ATCC 38163 / CBS 112.46 / NRRL 194 / M139) (Aspergillus nidulans).